A 250-amino-acid chain; its full sequence is Leucyl/phenylalanyl-tRNA--protein transferase (250 aa).

Belongs to the L/F-transferase family.

The protein localises to the cytoplasm. It catalyses the reaction N-terminal L-lysyl-[protein] + L-leucyl-tRNA(Leu) = N-terminal L-leucyl-L-lysyl-[protein] + tRNA(Leu) + H(+). The catalysed reaction is N-terminal L-arginyl-[protein] + L-leucyl-tRNA(Leu) = N-terminal L-leucyl-L-arginyl-[protein] + tRNA(Leu) + H(+). The enzyme catalyses L-phenylalanyl-tRNA(Phe) + an N-terminal L-alpha-aminoacyl-[protein] = an N-terminal L-phenylalanyl-L-alpha-aminoacyl-[protein] + tRNA(Phe). Functionally, functions in the N-end rule pathway of protein degradation where it conjugates Leu, Phe and, less efficiently, Met from aminoacyl-tRNAs to the N-termini of proteins containing an N-terminal arginine or lysine. The protein is Leucyl/phenylalanyl-tRNA--protein transferase of Cupriavidus pinatubonensis (strain JMP 134 / LMG 1197) (Cupriavidus necator (strain JMP 134)).